The sequence spans 374 residues: RNA polymerase sigma factor SigA (374 aa).

Positions 141–211 (LAEANLRLVV…TRAIADQART (71 aa)) are sigma-70 factor domain-2. Residues 165–168 (DLIQ) carry the Interaction with polymerase core subunit RpoC motif. The segment at 220 to 296 (ETINKLIRVQ…DQDATSPSDH (77 aa)) is sigma-70 factor domain-3. Residues 309–362 (VLDTLTDREENVLRLRFGLDDGRTRTLEEVGRVFGVTRERIRQIEAKALRKLRH) form a sigma-70 factor domain-4 region. The segment at residues 335–354 (LEEVGRVFGVTRERIRQIEA) is a DNA-binding region (H-T-H motif).

Belongs to the sigma-70 factor family. RpoD/SigA subfamily. In terms of assembly, interacts transiently with the RNA polymerase catalytic core.

Its subcellular location is the cytoplasm. Its function is as follows. Sigma factors are initiation factors that promote the attachment of RNA polymerase to specific initiation sites and are then released. This sigma factor is the primary sigma factor during exponential growth. This chain is RNA polymerase sigma factor SigA, found in Listeria innocua serovar 6a (strain ATCC BAA-680 / CLIP 11262).